Reading from the N-terminus, the 167-residue chain is Small ribosomal subunit protein uS3m (167 aa).

Residues 1–35 (MAASVCSGLLGPRVLSWSRELPCAWRALHTSPVCA) constitute a mitochondrion transit peptide.

This sequence belongs to the universal ribosomal protein uS3 family. In terms of assembly, component of the mitochondrial small ribosomal subunit (mt-SSU). Mature mammalian 55S mitochondrial ribosomes consist of a small (28S) and a large (39S) subunit. The 28S small subunit contains a 12S ribosomal RNA (12S mt-rRNA) and 30 different proteins. The 39S large subunit contains a 16S rRNA (16S mt-rRNA), a copy of mitochondrial valine transfer RNA (mt-tRNA(Val)), which plays an integral structural role, and 52 different proteins.

It localises to the mitochondrion. The sequence is that of Small ribosomal subunit protein uS3m (MRPS24) from Homo sapiens (Human).